A 308-amino-acid polypeptide reads, in one-letter code: FGSLLGICLMTQIITGLLLAMHYTADTTLAFTSVAHMCRNVQFGWLIRNLHANGASFFFICIYLHIGRGLYYGSYLYKETWNIGVILLLTLMATAFVGYVLPWGQMSFWGATVITNLFSAIPYIGQTLVEWAWGGFSVDNPTLTRFFALHFLLHFIIAGLTFIHLTLLHETGSNNPLGISSNCDKIPFHPYFSTKDALGFILLLFPLMTLAMFSPNLLGDPENFTPANPLVTPPHIKPEWYFLFAYAILRSIPNKLGGVLALAASVLILLLIPLLHTSKQRTMTFRPLSQFLFWTLVMNLLILTWIGS.

4 helical membrane passes run 1–21, 45–66, 81–101, and 146–166; these read FGSLLGICLMTQIITGLLLAM, WLIRNLHANGASFFFICIYLHI, WNIGVILLLTLMATAFVGYVL, and FFALHFLLHFIIAGLTFIHLT. His-51 and His-65 together coordinate heme b. Heme b-binding residues include His-150 and His-164. Residue His-169 participates in a ubiquinone binding. 3 consecutive transmembrane segments (helical) span residues 194 to 214, 256 to 276, and 288 to 308; these read TKDALGFILLLFPLMTLAMFS, LGGVLALAASVLILLLIPLLH, and LSQFLFWTLVMNLLILTWIGS.

This sequence belongs to the cytochrome b family. The cytochrome bc1 complex contains 11 subunits: 3 respiratory subunits (MT-CYB, CYC1 and UQCRFS1), 2 core proteins (UQCRC1 and UQCRC2) and 6 low-molecular weight proteins (UQCRH/QCR6, UQCRB/QCR7, UQCRQ/QCR8, UQCR10/QCR9, UQCR11/QCR10 and a cleavage product of UQCRFS1). This cytochrome bc1 complex then forms a dimer. Heme b serves as cofactor.

Its subcellular location is the mitochondrion inner membrane. Component of the ubiquinol-cytochrome c reductase complex (complex III or cytochrome b-c1 complex) that is part of the mitochondrial respiratory chain. The b-c1 complex mediates electron transfer from ubiquinol to cytochrome c. Contributes to the generation of a proton gradient across the mitochondrial membrane that is then used for ATP synthesis. This chain is Cytochrome b (MT-CYB), found in Zaratornis stresemanni (White-cheeked cotinga).